The chain runs to 165 residues: Ribosome maturation factor RimM (165 aa).

In terms of domain architecture, PRC barrel spans 94-165 (EDEFYIADLN…YVILNYQTKV (72 aa)).

The protein belongs to the RimM family. Binds ribosomal protein uS19.

It localises to the cytoplasm. An accessory protein needed during the final step in the assembly of 30S ribosomal subunit, possibly for assembly of the head region. Essential for efficient processing of 16S rRNA. May be needed both before and after RbfA during the maturation of 16S rRNA. It has affinity for free ribosomal 30S subunits but not for 70S ribosomes. In Rickettsia typhi (strain ATCC VR-144 / Wilmington), this protein is Ribosome maturation factor RimM.